A 1234-amino-acid chain; its full sequence is Formin-like protein 3 (1234 aa).

The Phosphatase tensin-type domain maps to 1–208 (MRLDSFPASI…QYVARRNISP (208 aa)). C141 functions as the Phosphocysteine intermediate in the catalytic mechanism. Positions 214-352 (ERALSFDCLI…FRAEMLFCEL (139 aa)) constitute a C2 tensin-type domain. Disordered stretches follow at residues 443-478 (DSDE…NINH) and 492-840 (LVNT…LKPL). The span at 498–507 (VLPPTTPPPC) shows a compositional bias: pro residues. A compositionally biased stretch (basic and acidic residues) spans 524–534 (VQHESPSDRKL). 7 stretches are compositionally biased toward pro residues: residues 536–576 (SPSP…PPLP), 584–656 (QPPP…PPAP), 663–673 (PAPPPPPPPPR), 688–699 (GPPPPPPPPLPP), 709–721 (PSAP…PPPA), 729–739 (APAPPLPPPLP), and 762–784 (PAPP…PPPL). An FH2 domain is found at 827-1226 (QQSNPPKKAS…KLEKDKEKAT (400 aa)).

It belongs to the formin-like family. Class-II subfamily.

The sequence is that of Formin-like protein 3 (FH3) from Oryza sativa subsp. japonica (Rice).